Reading from the N-terminus, the 778-residue chain is Aerobic respiration control sensor protein ArcB (778 aa).

Residues methionine 1–methionine 25 lie on the Cytoplasmic side of the membrane. Residues leucine 26–leucine 46 traverse the membrane as a helical segment. At histidine 47–arginine 57 the chain is on the periplasmic side. A helical transmembrane segment spans residues serine 58–glutamate 78. Topologically, residues glutamine 79–lysine 778 are cytoplasmic. The 71-residue stretch at glutamine 153 to asparagine 223 folds into the PAS domain. In terms of domain architecture, PAC spans leucine 226–arginine 278. In terms of domain architecture, Histidine kinase spans threonine 289–serine 507. Histidine 292 is subject to Phosphohistidine; by autocatalysis. In terms of domain architecture, Response regulatory spans asparagine 527–tryptophan 643. Aspartate 576 is subject to 4-aspartylphosphate. In terms of domain architecture, HPt spans glycine 678–tryptophan 771. Histidine 717 carries the post-translational modification Phosphohistidine.

Post-translationally, activation requires a sequential transfer of a phosphate group from a His in the primary transmitter domain, to an Asp in the receiver domain and to a His in the secondary transmitter domain.

The protein resides in the cell inner membrane. The catalysed reaction is ATP + protein L-histidine = ADP + protein N-phospho-L-histidine.. Member of the two-component regulatory system ArcB/ArcA. Sensor-regulator protein for anaerobic repression of the arc modulon. Activates ArcA via a four-step phosphorelay. ArcB can also dephosphorylate ArcA by a reverse phosphorelay involving His-717 and Asp-576. The polypeptide is Aerobic respiration control sensor protein ArcB (arcB) (Escherichia coli O157:H7).